A 259-amino-acid chain; its full sequence is Isoepoxydon dehydrogenase patN (259 aa).

The NADP(+) site is built by Asp69, Asn96, and Lys125. Active-site proton donor residues include Ser143 and Ser144. Positions 158, 162, and 191 each coordinate NADP(+). Catalysis depends on Tyr158, which acts as the Proton acceptor. Lys162 functions as the Lowers pKa of active site Tyr in the catalytic mechanism.

This sequence belongs to the short-chain dehydrogenases/reductases (SDR) family.

The protein localises to the cytoplasm. Its subcellular location is the cytosol. It catalyses the reaction isoepoxydon + NADP(+) = phyllostine + NADPH + H(+). The protein operates within mycotoxin biosynthesis; patulin biosynthesis. Functionally, isoepoxydon dehydrogenase; part of the gene cluster that mediates the biosynthesis of patulin, an acetate-derived tetraketide mycotoxin produced by several fungal species that shows antimicrobial properties against several bacteria. PatN catalyzes the conversion of isoepoxydon into phyllostine. The pathway begins with the synthesis of 6-methylsalicylic acid by the polyketide synthase (PKS) patK via condensation of acetate and malonate units. The 6-methylsalicylic acid decarboxylase patG then catalyzes the decarboxylation of 6-methylsalicylic acid to yield m-cresol (also known as 3-methylphenol). These first reactions occur in the cytosol. The intermediate m-cresol is then transported into the endoplasmic reticulum where the cytochrome P450 monooxygenase patH converts it to m-hydroxybenzyl alcohol, which is further converted to gentisyl alcohol by the cytochrome P450 monooxygenase patI. The oxidoreductases patJ and patO further convert gentisyl alcohol to isoepoxydon in the vacuole. PatN catalyzes then the transformation of isoepoxydon into phyllostine. The cluster protein patF is responsible for the conversion from phyllostine to neopatulin whereas the alcohol dehydrogenase patD converts neopatulin to E-ascladiol. The steps between isoepoxydon and E-ascladiol occur in the cytosol, and E-ascladiol is probably secreted to the extracellular space by one of the cluster-specific transporters patC or patM. Finally, the secreted patulin synthase patE catalyzes the conversion of E-ascladiol to patulin. This Penicillium expansum (Blue mold rot fungus) protein is Isoepoxydon dehydrogenase patN.